The chain runs to 171 residues: UPF0763 protein HPP12_0677 (171 aa).

The protein belongs to the UPF0763 family.

The protein is UPF0763 protein HPP12_0677 of Helicobacter pylori (strain P12).